Reading from the N-terminus, the 1112-residue chain is Rho GTPase-activating protein 7 (1112 aa).

The SAM domain maps to 37–104 (LAEIEAKEAC…LNKCAVMKLE (68 aa)). Residues Ser-112, Ser-115, and Ser-155 each carry the phosphoserine modification. 4 disordered regions span residues 146–203 (SPKQ…APAR), 318–350 (RSISSSTQTSSSSSQSETSSNVSTPSPVTRTRS), 405–459 (PKAL…VSSR), and 512–574 (SDEG…GVGA). Positions 183 to 193 (VHSTGSLTTHA) are enriched in polar residues. The segment at 296–468 (QLNCVEISAL…RLSIYDNVPG (173 aa)) is focal adhesion-targeting (FAT). 2 stretches are compositionally biased toward low complexity: residues 320 to 348 (ISSSTQTSSSSSQSETSSNVSTPSPVTRT) and 409 to 423 (SNGSFSPSGNNSSVN). The residue at position 343 (Ser-343) is a Phosphoserine. A compositionally biased stretch (basic and acidic residues) spans 437-446 (LRRENSSPKE). Residues 520 to 532 (ALDSVSPCPSSPK) show a composition bias toward polar residues. Positions 534 to 544 (IHLDVDNDRAT) are enriched in basic and acidic residues. The span at 547-556 (DLDSTGNSLN) shows a compositional bias: polar residues. The tract at residues 635–657 (KHGFSWAVPKFMKRIKVPDYKDR) is polybasic cluster (PBR). The region spanning 662–868 (VPLTVNVQRT…HMIAECKKLF (207 aa)) is the Rho-GAP domain. Positions 898–1105 (CNDDSADYQH…RDSFSHQNTE (208 aa)) constitute an START domain.

Interacts with EF1A1, facilitates EF1A1 distribution to the membrane periphery and ruffles upon growth factor stimulation and suppresses cell migration. Interacts with tensin TNS1 (via N-terminus); the interaction is decreased by phosphorylation of TNS1. Interacts with TNS3 and PTEN; in resting cells, interacts with TNS3 (via C2 tensin-type domain) but, following growth factor stimulation, TNS3 and PTEN are phosphorylated which leads to weakened interaction with TNS3 and enhanced interaction with PTEN. Interacts (via C-terminus) with tensin TNS4 (via SH2 domain); the interaction is independent of tyrosine phosphorylation of DLC1.

The protein localises to the cytoplasm. Its subcellular location is the cell junction. It is found in the focal adhesion. It localises to the membrane. Its function is as follows. Functions as a GTPase-activating protein for the small GTPases RHOA, RHOB, RHOC and CDC42, terminating their downstream signaling. This induces morphological changes and detachment through cytoskeletal reorganization, playing a critical role in biological processes such as cell migration and proliferation. Also functions in vivo as an activator of the phospholipase PLCD1. Active DLC1 increases cell migration velocity but reduces directionality. Required for growth factor-induced epithelial cell migration; in resting cells, interacts with TNS3 while PTEN interacts with the p85 regulatory subunit of the PI3K kinase complex but growth factor stimulation induces phosphorylation of TNS3 and PTEN, causing them to change their binding preference so that PTEN interacts with DLC1 and TNS3 interacts with p85. The PTEN-DLC1 complex translocates to the posterior of migrating cells to activate RHOA while the TNS3-p85 complex translocates to the leading edge of migrating cells to promote RAC1 activation. This Bos taurus (Bovine) protein is Rho GTPase-activating protein 7 (DLC1).